A 133-amino-acid polypeptide reads, in one-letter code: Profilin-1 (133 aa).

An intrachain disulfide couples Cys95 to Cys117.

Belongs to the profilin family. In terms of assembly, dimer and tetramer. Occurs in many kinds of cells as a complex with monomeric actin in a 1:1 ratio.

It is found in the cytoplasm. It localises to the cytoskeleton. In terms of biological role, binds to actin and affects the structure of the cytoskeleton. At high concentrations, profilin prevents the polymerization of actin, whereas it enhances it at low concentrations. By binding to PIP2, it inhibits the formation of IP3 and DG. Possesses high binding affinity for poly(L-proline). The sequence is that of Profilin-1 from Artemisia vulgaris (Mugwort).